We begin with the raw amino-acid sequence, 1236 residues long: Structural polyprotein (1236 aa).

The interval 1–36 is necessary for nucleocapsid assembly and virus assembly; it reads MFPYPQLNFPPVYPTNPMAYRDPNPPRCRWRPFRPP. The segment at 37–70 is host transcription inhibition; the sequence is LAAQIEDLRRSIANLTFKQRSPNPPPGPPPKKKK. A Supraphysiological nuclear export signal motif is present at residues 44–51; the sequence is LRRSIANL. A disordered region spans residues 44-103; sequence LRRSIANLTFKQRSPNPPPGPPPKKKKSAPKPKPTQPKKKKQQAKKTKRKPKPGKRQRMC. A compositionally biased stretch (basic residues) spans 66 to 102; the sequence is PKKKKSAPKPKPTQPKKKKQQAKKTKRKPKPGKRQRM. Positions 67-70 match the Nuclear localization signal motif; the sequence is KKKK. The segment at 83–111 is binding to the viral RNA; that stretch reads KKQQAKKTKRKPKPGKRQRMCMKLESDKT. A ribosome-binding region spans residues 96-110; it reads PGKRQRMCMKLESDK. Ser108 is subject to Phosphoserine. Residues 110 to 259 enclose the Peptidase S3 domain; that stretch reads KTFPIMLNGQ…KDTPEGSEPW (150 aa). A Phosphothreonine modification is found at Thr111. The active-site Charge relay system is the His136. The interaction with spike glycoprotein E2 stretch occupies residues 152–157; the sequence is KKASMY. Catalysis depends on charge relay system residues Asp158 and Ser210. The interaction with spike glycoprotein E2 stretch occupies residues 244-248; the sequence is QKGVT. The tract at residues 260–271 is functions as an uncleaved signal peptide for the precursor of protein E3/E2; the sequence is SLVTALCVLSNV. At 260–687 the chain is on the extracellular side; sequence SLVTALCVLS…YYHRHPVYTV (428 aa). 7 disulfides stabilise this stretch: Cys266-Cys275, Cys335-Cys443, Cys338-Cys344, Cys410-Cys424, Cys471-Cys585, Cys520-Cys545, and Cys522-Cys539. N-linked (GlcNAc...) asparagine; by host glycosylation is present at Asn270. An N-linked (GlcNAc...) asparagine; by host glycan is attached at Asn515. An N-linked (GlcNAc...) asparagine; by host glycan is attached at Asn637. The chain crosses the membrane as a helical span at residues 688–708; the sequence is IVLCGVALAILVGTASSAACI. The Cytoplasmic portion of the chain corresponds to 709–742; that stretch reads AKARRDCLTPYALAPNATVPTALAVLCCIRPTNA. The tract at residues 710 to 714 is interaction with the capsid protein; that stretch reads KARRD. 3 S-palmitoyl cysteine; by host lipidation sites follow: Cys715, Cys735, and Cys736. Cys715 and Cys736 form a disulfide bridge. The transient transmembrane before p62-6K protein processing stretch occupies residues 717-737; that stretch reads TPYALAPNATVPTALAVLCCI. Residues 743 to 767 lie on the Extracellular side of the membrane; that stretch reads ETFGETLNHLWFNNQPFLWAQLCIP. A run of 2 helical transmembrane segments spans residues 768-788 and 789-809; these read LAAL…LLVA and GVCL…NVPG. The Extracellular portion of the chain corresponds to 810–1205; that stretch reads IPYKALVERA…QAAVSKTSWN (396 aa). 4 disulfide bridges follow: Cys846-Cys911, Cys859-Cys891, Cys860-Cys893, and Cys865-Cys875. The segment at 881–898 is E1 fusion peptide loop; the sequence is VYPFMWGGAQCFCDSENT. 3 N-linked (GlcNAc...) asparagine; by host glycosylation sites follow: Asn936, Asn1042, and Asn1067. 4 disulfide bridges follow: Cys1056/Cys1068, Cys1098/Cys1173, Cys1103/Cys1177, and Cys1125/Cys1167. A helical membrane pass occupies residues 1206–1226; it reads WLLALFGGASSLIVVGLIVLV. Over 1227–1236 the chain is Cytoplasmic; sequence CSSMLINTRR.

As to quaternary structure, homodimer. Homomultimer. Interacts with host karyopherin KPNA4; this interaction allows the nuclear import of the viral capsid protein. Interacts with spike glycoprotein E2. Interacts with host IRAK1; the interaction leads to inhibition of IRAK1-dependent signaling. Part of a tetrameric complex composed of host CRM1, host importin alpha/beta dimer and the viral capsid; this complex blocks the receptor-mediated transport through the nuclear pore. Interacts with host phosphatase PPP1CA; this interaction dephosphorylates the capsid protein, which increases its ability to bind to the viral genome. The precursor of protein E3/E2 and E1 form a heterodimer shortly after synthesis. In terms of assembly, interacts with spike glycoprotein E2. The precursor of protein E3/E2 and E1 form a heterodimer shortly after synthesis. Processing of the precursor of protein E3/E2 into E2 and E3 results in a heterodimer of the spike glycoproteins E2 and E1. Spike at virion surface are constituted of three E2-E1 heterodimers. After target cell attachment and endocytosis, E1 change conformation to form homotrimers. Interacts with 6K protein. As to quaternary structure, interacts with spike glycoprotein E1. Processing of the precursor of protein E3/E2 into E2 and E3 results in a heterodimer of the spike glycoproteins E2 and E1. Spike at virion surface are constituted of a trimer of E2-E1 heterodimers. Interacts with 6K protein. The E2-E1 heterodimer interacts with host PCDH10 (via domain Cadherin 1); this interaction mediates viral entry to the host cell. Oligomer. Interacts with spike glycoprotein E1. Interacts with spike glycoprotein E2. Structural polyprotein: Specific enzymatic cleavages in vivo yield mature proteins. Capsid protein is auto-cleaved during polyprotein translation, unmasking a signal peptide at the N-terminus of the precursor of E3/E2. The remaining polyprotein is then targeted to the host endoplasmic reticulum, where host signal peptidase cleaves it into pE2, 6K and E1 proteins. pE2 is further processed to mature E3 and E2 by host furin in trans-Golgi vesicle. Post-translationally, phosphorylated on serine and threonine residues. In terms of processing, palmitoylated via thioester bonds. These palmitoylations may induce disruption of the C-terminus transmembrane. This would result in the reorientation of E2 C-terminus from lumenal to cytoplasmic side. N-glycosylated. Post-translationally, palmitoylated via thioester bonds.

The protein localises to the virion. The protein resides in the host cytoplasm. It localises to the host cell membrane. It is found in the host nucleus. Its subcellular location is the virion membrane. The protein localises to the host Golgi apparatus. The protein resides in the host trans-Golgi network. It localises to the host endoplasmic reticulum. It carries out the reaction Autocatalytic release of the core protein from the N-terminus of the togavirus structural polyprotein by hydrolysis of a -Trp-|-Ser- bond.. Functionally, forms an icosahedral capsid with a T=4 symmetry composed of 240 copies of the capsid protein surrounded by a lipid membrane through which penetrate 80 spikes composed of trimers of E1-E2 heterodimers. The capsid protein binds to the viral RNA genome at a site adjacent to a ribosome binding site for viral genome translation following genome release. Possesses a protease activity that results in its autocatalytic cleavage from the nascent structural protein. Following its self-cleavage, the capsid protein transiently associates with ribosomes, and within several minutes the protein binds to viral RNA and rapidly assembles into icosahedric core particles. The resulting nucleocapsid eventually associates with the cytoplasmic domain of the spike glycoprotein E2 at the cell membrane, leading to budding and formation of mature virions. In case of infection, new virions attach to target cells and after clathrin-mediated endocytosis their membrane fuses with the host endosomal membrane. This leads to the release of the nucleocapsid into the cytoplasm, followed by an uncoating event necessary for the genomic RNA to become accessible. The uncoating might be triggered by the interaction of capsid proteins with ribosomes. Binding of ribosomes would release the genomic RNA since the same region is genomic RNA-binding and ribosome-binding. Specifically inhibits interleukin-1 receptor-associated kinase 1/IRAK1-dependent signaling during viral entry, representing a means by which the alphaviruses may evade innate immune detection and activation prior to viral gene expression. Inhibits host transcription. Forms a tetrameric complex with XPO1/CRM1 and the nuclear import receptor importin. This complex blocks the central channel of host nuclear pores thereby inhibiting the receptor-mediated nuclear transport and thus the host mRNA and rRNA transcription. The inhibition of transcription is linked to a cytopathic effect on the host cell. Its function is as follows. Provides the signal sequence for the translocation of the precursor of protein E3/E2 to the host endoplasmic reticulum. Furin-cleaved E3 remains associated with spike glycoprotein E1 and mediates pH protection of the latter during the transport via the secretory pathway. After virion release from the host cell, the assembly protein E3 is gradually released in the extracellular space. In terms of biological role, plays an essential role in viral attachment to target host cell, by binding to the cell receptor PCDH10. Some specific strains may also bind host receptors VLDLR and LRP8/APOER2. Synthesized as a pE2 precursor which is processed by furin at the cell membrane just before virion budding, giving rise to E2-E1 heterodimer. The pE2-E1 heterodimer is stable, whereas E2-E1 is unstable and dissociate at low pH. pE2 is processed at the last step, presumably to avoid E1 fusion activation before its final export to cell surface. E2 C-terminus contains a transitory transmembrane that would be disrupted by palmitoylation, resulting in reorientation of the C-terminal tail from lumenal to cytoplasmic side. This step is critical since E2 C-terminus is involved in budding by interacting with capsid proteins. This release of E2 C-terminus in cytoplasm occurs lately in protein export, and precludes premature assembly of particles at the endoplasmic reticulum membrane. Protein 6K: Acts as a viroporin that participates in virus glycoprotein processing and transport to the plasma membrane, cell permeabilization and budding of viral particles. Disrupts the calcium homeostasis of the cell, probably at the endoplasmic reticulum level resulting in the increased levels of cytoplasmic calcium. Because of its lipophilic properties, the 6K protein is postulated to influence the selection of lipids that interact with the transmembrane domains of the glycoproteins, which, in turn, affects the deformability of the bilayer required for the extreme curvature that occurs as budding proceeds. Present in low amount in virions, about 3% compared to viral glycoproteins. Functionally, class II viral fusion protein. Fusion activity is inactive as long as E1 is bound to E2 in mature virion. After virus attachment to target cell receptor PCDH10 and endocytosis, acidification of the endosome induce dissociation of E1/E2 heterodimer and concomitant trimerization of the E1 subunits. This E1 trimer is fusion active, and promotes release of viral nucleocapsid in cytoplasm after endosome and viral membrane fusion. Efficient fusion requires the presence of cholesterol and sphingolipid in the target membrane. The polypeptide is Structural polyprotein (Western equine encephalitis virus (WEEV)).